Reading from the N-terminus, the 343-residue chain is UDP-3-O-acylglucosamine N-acyltransferase (343 aa).

Catalysis depends on His237, which acts as the Proton acceptor.

Belongs to the transferase hexapeptide repeat family. LpxD subfamily. Homotrimer.

It carries out the reaction a UDP-3-O-[(3R)-3-hydroxyacyl]-alpha-D-glucosamine + a (3R)-hydroxyacyl-[ACP] = a UDP-2-N,3-O-bis[(3R)-3-hydroxyacyl]-alpha-D-glucosamine + holo-[ACP] + H(+). Its pathway is bacterial outer membrane biogenesis; LPS lipid A biosynthesis. Its function is as follows. Catalyzes the N-acylation of UDP-3-O-acylglucosamine using 3-hydroxyacyl-ACP as the acyl donor. Is involved in the biosynthesis of lipid A, a phosphorylated glycolipid that anchors the lipopolysaccharide to the outer membrane of the cell. The polypeptide is UDP-3-O-acylglucosamine N-acyltransferase (Synechococcus sp. (strain JA-3-3Ab) (Cyanobacteria bacterium Yellowstone A-Prime)).